The following is a 330-amino-acid chain: Ribose-phosphate pyrophosphokinase (330 aa).

55 to 57 is an ATP binding site; the sequence is DGE. Residues His148 and Asp187 each contribute to the Mg(2+) site. Lys211 is a catalytic residue. Residues Arg213, Asp237, and 241 to 245 each bind D-ribose 5-phosphate; that span reads DTGGT.

It belongs to the ribose-phosphate pyrophosphokinase family. Class I subfamily. As to quaternary structure, homohexamer. Mg(2+) is required as a cofactor.

Its subcellular location is the cytoplasm. The catalysed reaction is D-ribose 5-phosphate + ATP = 5-phospho-alpha-D-ribose 1-diphosphate + AMP + H(+). Its pathway is metabolic intermediate biosynthesis; 5-phospho-alpha-D-ribose 1-diphosphate biosynthesis; 5-phospho-alpha-D-ribose 1-diphosphate from D-ribose 5-phosphate (route I): step 1/1. Involved in the biosynthesis of the central metabolite phospho-alpha-D-ribosyl-1-pyrophosphate (PRPP) via the transfer of pyrophosphoryl group from ATP to 1-hydroxyl of ribose-5-phosphate (Rib-5-P). The chain is Ribose-phosphate pyrophosphokinase from Nostoc sp. (strain PCC 7120 / SAG 25.82 / UTEX 2576).